Here is a 319-residue protein sequence, read N- to C-terminus: Methionyl-tRNA formyltransferase (319 aa).

113–116 (SLLP) is a binding site for (6S)-5,6,7,8-tetrahydrofolate.

The protein belongs to the Fmt family.

The catalysed reaction is L-methionyl-tRNA(fMet) + (6R)-10-formyltetrahydrofolate = N-formyl-L-methionyl-tRNA(fMet) + (6S)-5,6,7,8-tetrahydrofolate + H(+). Attaches a formyl group to the free amino group of methionyl-tRNA(fMet). The formyl group appears to play a dual role in the initiator identity of N-formylmethionyl-tRNA by promoting its recognition by IF2 and preventing the misappropriation of this tRNA by the elongation apparatus. This chain is Methionyl-tRNA formyltransferase, found in Pseudomonas fluorescens (strain Pf0-1).